The primary structure comprises 403 residues: Tryptophan synthase beta chain 1 (403 aa).

Position 96 is an N6-(pyridoxal phosphate)lysine (K96).

It belongs to the TrpB family. In terms of assembly, tetramer of two alpha and two beta chains. Pyridoxal 5'-phosphate serves as cofactor.

The catalysed reaction is (1S,2R)-1-C-(indol-3-yl)glycerol 3-phosphate + L-serine = D-glyceraldehyde 3-phosphate + L-tryptophan + H2O. It participates in amino-acid biosynthesis; L-tryptophan biosynthesis; L-tryptophan from chorismate: step 5/5. In terms of biological role, the beta subunit is responsible for the synthesis of L-tryptophan from indole and L-serine. This chain is Tryptophan synthase beta chain 1 (trpB1), found in Wolinella succinogenes (strain ATCC 29543 / DSM 1740 / CCUG 13145 / JCM 31913 / LMG 7466 / NCTC 11488 / FDC 602W) (Vibrio succinogenes).